Consider the following 102-residue polypeptide: MAGQRIRVKLKAFDHRLIDQSTFEIVATAKRTGATVSGPIPLPTKKEIYTVLRSPHVNKKAREQFEMRTHKRLIDILNTNEDTVEALMKLQLPAGVSVDIKS.

This sequence belongs to the universal ribosomal protein uS10 family. As to quaternary structure, part of the 30S ribosomal subunit.

Its function is as follows. Involved in the binding of tRNA to the ribosomes. The chain is Small ribosomal subunit protein uS10 from Leptospira biflexa serovar Patoc (strain Patoc 1 / Ames).